Here is a 480-residue protein sequence, read N- to C-terminus: Protein nucleotidyltransferase YdiU (480 aa).

8 residues coordinate ATP: G86, G88, R89, K109, D121, G122, R172, and R179. The active-site Proton acceptor is D248. Mg(2+) is bound by residues N249 and D258. D258 contributes to the ATP binding site.

Belongs to the SELO family. Mg(2+) is required as a cofactor. It depends on Mn(2+) as a cofactor.

The enzyme catalyses L-seryl-[protein] + ATP = 3-O-(5'-adenylyl)-L-seryl-[protein] + diphosphate. The catalysed reaction is L-threonyl-[protein] + ATP = 3-O-(5'-adenylyl)-L-threonyl-[protein] + diphosphate. It catalyses the reaction L-tyrosyl-[protein] + ATP = O-(5'-adenylyl)-L-tyrosyl-[protein] + diphosphate. It carries out the reaction L-histidyl-[protein] + UTP = N(tele)-(5'-uridylyl)-L-histidyl-[protein] + diphosphate. The enzyme catalyses L-seryl-[protein] + UTP = O-(5'-uridylyl)-L-seryl-[protein] + diphosphate. The catalysed reaction is L-tyrosyl-[protein] + UTP = O-(5'-uridylyl)-L-tyrosyl-[protein] + diphosphate. Nucleotidyltransferase involved in the post-translational modification of proteins. It can catalyze the addition of adenosine monophosphate (AMP) or uridine monophosphate (UMP) to a protein, resulting in modifications known as AMPylation and UMPylation. The sequence is that of Protein nucleotidyltransferase YdiU from Klebsiella pneumoniae (strain 342).